The following is a 367-amino-acid chain: MKKQRIVVKIGSSSLADSHEGISKEQLSDHVAALARLKEEGHEVLLITSGAVAAGFSALGYPSRPVTIKGKQAAAAVGQSLLMQAYTEEFRKYGIVTAQLLLTRSDFSRKEQYSNAYATLGELLNRSALPIINENDSISLEELTFGDNDMLSALVSGLVSADMLMIFTDVNGLYDKNPQKNEDAKKYYFLPEVTEEIASLAGDAGSKLGTGGMKSKVDAAKTALSLGVSVFIGTGRGQEKFVDVLKGKGDGTYVGNAPQKEMKMNKQWIALHSVVSGQIEIDAGAATAIIQHGKSLLPAGVTNVSGFFQVGEVVEVMTQQGRVIGKGQCTYSAEELRDVKGMQSQHIQARGERHSYEVIHRDHWVSL.

K9 is a binding site for ATP. Substrate contacts are provided by S49, D136, and N148. ATP contacts are provided by residues 168-169 (TD) and 210-216 (TGGMKSK). In terms of domain architecture, PUA spans 276 to 350 (SGQIEIDAGA…GMQSQHIQAR (75 aa)).

Belongs to the glutamate 5-kinase family.

It is found in the cytoplasm. It carries out the reaction L-glutamate + ATP = L-glutamyl 5-phosphate + ADP. It participates in amino-acid biosynthesis; L-proline biosynthesis; L-glutamate 5-semialdehyde from L-glutamate: step 1/2. In terms of biological role, catalyzes the transfer of a phosphate group to glutamate to form L-glutamate 5-phosphate. This Bacillus cereus (strain ZK / E33L) protein is Glutamate 5-kinase.